Consider the following 116-residue polypeptide: G antigen 2A (116 aa).

Residues 1–116 (MSWRGRSTYR…PEEGEKQSQC (116 aa)) are disordered. Acidic residues-rich tracts occupy residues 31–44 (FSDE…EEGE) and 86–95 (ECEDGPDGQE). The span at 102–116 (EEVKTPEEGEKQSQC) shows a compositional bias: basic and acidic residues.

The protein belongs to the GAGE family.

In Homo sapiens (Human), this protein is G antigen 2A (GAGE2A).